The following is a 352-amino-acid chain: C-X-C chemokine receptor type 4 (352 aa).

Positions 1–21 are important for chemokine binding and signaling; it reads MEGISIYTSDNYTEEMGSGDY. The Extracellular segment spans residues 1-38; it reads MEGISIYTSDNYTEEMGSGDYDSIKEPCFREENAHFNR. Tyr7 bears the Sulfotyrosine mark. Asn11 is a glycosylation site (N-linked (GlcNAc...) asparagine). Tyr12 bears the Sulfotyrosine mark. O-linked (Xyl...) (chondroitin sulfate) serine glycosylation is present at Ser18. Position 21 is a sulfotyrosine (Tyr21). 2 disulfide bridges follow: Cys28–Cys274 and Cys109–Cys186. The helical transmembrane segment at 39–63 threads the bilayer; sequence IFLPTIYSIIFLTGIVGNGLVILVM. The Cytoplasmic segment spans residues 64–77; it reads GYQKKLRSMTDKYR. Residues 78-99 traverse the membrane as a helical segment; it reads LHLSVADLLFVITLPFWAVDAV. The tract at residues 94–97 is chemokine binding; sequence WAVD. Over 100–110 the chain is Extracellular; it reads ANWYFGNFLCK. Residues 111-130 form a helical membrane-spanning segment; sequence AVHVIYTVNLYSSVLILAFI. The segment at 113 to 117 is chemokine binding; it reads HVIYT. The Cytoplasmic segment spans residues 131–154; the sequence is SLDRYLAIVHATNSQKPRKLLAEK. Positions 133 to 135 match the Important for signaling motif; the sequence is DRY. The segment at 135–147 is involved in dimerization; when bound to chemokine; sequence YLAIVHATNSQKP. The chain crosses the membrane as a helical span at residues 155-174; that stretch reads VVYVGVWIPALLLTIPDFIF. Residues 175–195 are Extracellular-facing; it reads ASVSEADDRYICDRFYPNDLW. The interval 186–190 is chemokine binding, important for signaling; that stretch reads CDRFY. Residues 191–210 form an involved in dimerization region; that stretch reads PNDLWVVVFQFQHIMVGLIL. The helical transmembrane segment at 196 to 216 threads the bilayer; that stretch reads VVVFQFQHIMVGLILPGIVIL. At 217-241 the chain is on the cytoplasmic side; it reads SCYCIIISKLSHSKGHQKGKALKTT. A helical membrane pass occupies residues 242 to 261; sequence VILILAFFACWLPYYIGISI. Over 262 to 282 the chain is Extracellular; the sequence is DSFILLEIIKQGCEFENTVHK. The tract at residues 266-268 is involved in dimerization; sequence LLE. Residues 283–302 traverse the membrane as a helical segment; the sequence is WISITEALAFFHCCLNPILY. The Cytoplasmic segment spans residues 303–352; that stretch reads AFLGAKFKTSAQHALTSVSRGSSLKILSKGKRGGHSSVSTESESSSFHSS. 2 positions are modified to phosphoserine: Ser319 and Ser321. 2 positions are modified to phosphoserine; by PKC and GRK6: Ser324 and Ser325. Residues 329–352 are disordered; that stretch reads LSKGKRGGHSSVSTESESSSFHSS. Position 330 is a phosphoserine; by GRK6 (Ser330). A Glycyl lysine isopeptide (Lys-Gly) (interchain with G-Cter in ubiquitin) cross-link involves residue Lys331. Low complexity predominate over residues 337–352; sequence HSSVSTESESSSFHSS. At Ser339 the chain carries Phosphoserine; by GRK6. Residues Ser348 and Ser351 each carry the phosphoserine modification.

This sequence belongs to the G-protein coupled receptor 1 family. In terms of assembly, monomer. Can form homodimers. Interacts with CD164. Interacts with ARRB2; the interaction is dependent on the C-terminal phosphorylation of CXCR4 and allows activation of MAPK1 and MAPK3. Interacts with ARR3; the interaction is dependent on the C-terminal phosphorylation of CXCR4 and modulates calcium mobilization. Interacts with RNF113A; the interaction, enhanced by CXCL12, promotes CXCR4 ubiquitination and subsequent degradation. Interacts (via the cytoplasmic C-terminal) with ITCH (via the WW domains I and II); the interaction, enhanced by CXCL12, promotes CXCR4 ubiquitination and leads to its degradation. Interacts with extracellular ubiquitin. Interacts with DBN1; this interaction is enhanced by antigenic stimulation. Following LPS binding, may form a complex with GDF5, HSP90AA1 and HSPA8. In terms of processing, phosphorylated on agonist stimulation. Rapidly phosphorylated on serine and threonine residues in the C-terminal. Phosphorylation at Ser-324 and Ser-325 leads to recruitment of ITCH, ubiquitination and protein degradation. Ubiquitinated after ligand binding, leading to its degradation. Ubiquitinated by ITCH at the cell membrane on agonist stimulation. The ubiquitin-dependent mechanism, endosomal sorting complex required for transport (ESCRT), then targets CXCR4 for lysosomal degradation. This process is dependent also on prior Ser-/Thr-phosphorylation in the C-terminal of CXCR4. Also binding of ARRB1 to STAM negatively regulates CXCR4 sorting to lysosomes though modulating ubiquitination of SFR5S. Post-translationally, sulfation is required for efficient binding of CXCL12/SDF-1alpha and promotes its dimerization. In terms of processing, O- and N-glycosylated. N-glycosylation can mask coreceptor function. The O-glycosylation chondroitin sulfate attachment does not affect interaction with CXCL12/SDF-1alpha nor its coreceptor activity.

It localises to the cell membrane. It is found in the cell junction. The protein resides in the early endosome. Its subcellular location is the late endosome. The protein localises to the lysosome. Its function is as follows. Receptor for the C-X-C chemokine CXCL12/SDF-1 that transduces a signal by increasing intracellular calcium ion levels and enhancing MAPK1/MAPK3 activation. Involved in the AKT signaling cascade. Plays a role in regulation of cell migration, e.g. during wound healing. Acts as a receptor for extracellular ubiquitin; leading to enhanced intracellular calcium ions and reduced cellular cAMP levels. Binds bacterial lipopolysaccharide (LPS) et mediates LPS-induced inflammatory response, including TNF secretion by monocytes. Involved in hematopoiesis and in cardiac ventricular septum formation. Also plays an essential role in vascularization of the gastrointestinal tract, probably by regulating vascular branching and/or remodeling processes in endothelial cells. Involved in cerebellar development. In the CNS, could mediate hippocampal-neuron survival. The sequence is that of C-X-C chemokine receptor type 4 (CXCR4) from Chlorocebus aethiops (Green monkey).